Consider the following 616-residue polypeptide: Probable methyltransferase PMT2 (616 aa).

At 1–13 the chain is on the cytoplasmic side; that stretch reads MALKSSSADGKTR. A helical; Signal-anchor for type II membrane protein membrane pass occupies residues 14 to 34; sequence SSVQIFIVFSLCCFFYILGAW. Residues 35-616 lie on the Lumenal side of the membrane; that stretch reads QRSGFGKGDS…YWVTNSTSTH (582 aa). Residues Asn205 and Asn611 are each glycosylated (N-linked (GlcNAc...) asparagine).

This sequence belongs to the methyltransferase superfamily.

Its subcellular location is the golgi apparatus membrane. The chain is Probable methyltransferase PMT2 from Arabidopsis thaliana (Mouse-ear cress).